The following is a 312-amino-acid chain: CD-NTase-associated protein 12 (312 aa).

A TIR domain is found at Arg5 to Asp127.

It in the C-terminal section; belongs to the bacterial STING family. As to quaternary structure, forms homodimers; in the presence of c-di-GMP forms filaments with an ordered array of parallel-stacked subunits.

It catalyses the reaction NAD(+) + H2O = ADP-D-ribose + nicotinamide + H(+). With respect to regulation, NAD(+) hydrolase activity is strongly stimulated by c-di-GMP, weakly by 3'3'-cGAMP, very weakly by c-di-AMP but not at all by 2'3'-cGAMP. Self-association of TIR domains is required for NADase activity. Its function is as follows. Effector protein of a CBASS antiviral system with NAD(+) hydrolase activity. CBASS (cyclic oligonucleotide-based antiphage signaling system) provides immunity against bacteriophage. The CD-NTase protein synthesizes cyclic nucleotides in response to infection; these serve as specific second messenger signals. The signals activate a diverse range of effectors, leading to bacterial cell death and thus abortive phage infection. A type I-D CBASS(GG) system. Functionally, binds c-di-GMP, does not bind cUMP-AMP. Upon activation by c-di-GMP forms filaments which hydrolyze NAD(+); filament formation is required for enzyme activation. In Niabella drilacis (strain DSM 25811 / CCM 8410 / CCUG 62505 / LMG 26954 / E90), this protein is CD-NTase-associated protein 12.